The sequence spans 342 residues: Transmembrane protein 59-like (342 aa).

Residues 1–24 (MAAVALMPPPLLLLLLLASPPAAS) form the signal peptide. The N-linked (GlcNAc...) asparagine glycan is linked to Asn97. Residues 268 to 290 (WILACCLFLSVLVMLWLSCSTLV) form a helical membrane-spanning segment. Residues 340 to 342 (TKL) carry the Microbody targeting signal motif.

Belongs to the TMEM59 family. As to expression, expressed preferentially at high level in the brain.

The protein resides in the golgi apparatus membrane. In terms of biological role, modulates the O-glycosylation and complex N-glycosylation steps occurring during the Golgi maturation of APP. Inhibits APP transport to the cell surface and further shedding. The chain is Transmembrane protein 59-like (TMEM59L) from Homo sapiens (Human).